An 80-amino-acid polypeptide reads, in one-letter code: SPbeta prophage-derived thioredoxin-like protein YosR (80 aa).

A Thioredoxin domain is found at 1–80 (MRLIKLEQPN…ELDELLKELR (80 aa)). Cysteine 11 and cysteine 14 are oxidised to a cystine.

It belongs to the thioredoxin family.

The protein is SPbeta prophage-derived thioredoxin-like protein YosR (yosR) of Bacillus subtilis (strain 168).